A 215-amino-acid chain; its full sequence is dITP/XTP pyrophosphatase (215 aa).

13–18 (THNIGK) is a substrate binding site. D74 acts as the Proton acceptor in catalysis. Residue D74 coordinates Mg(2+). Substrate-binding positions include S75, 163-166 (FGFD), K186, and 199-200 (HR).

It belongs to the HAM1 NTPase family. Homodimer. Requires Mg(2+) as cofactor.

The enzyme catalyses XTP + H2O = XMP + diphosphate + H(+). The catalysed reaction is dITP + H2O = dIMP + diphosphate + H(+). It carries out the reaction ITP + H2O = IMP + diphosphate + H(+). Its function is as follows. Pyrophosphatase that catalyzes the hydrolysis of nucleoside triphosphates to their monophosphate derivatives, with a high preference for the non-canonical purine nucleotides XTP (xanthosine triphosphate), dITP (deoxyinosine triphosphate) and ITP. Seems to function as a house-cleaning enzyme that removes non-canonical purine nucleotides from the nucleotide pool, thus preventing their incorporation into DNA/RNA and avoiding chromosomal lesions. The chain is dITP/XTP pyrophosphatase from Bartonella henselae (strain ATCC 49882 / DSM 28221 / CCUG 30454 / Houston 1) (Rochalimaea henselae).